The sequence spans 179 residues: Repressor of phase 1 flagellin gene (179 aa).

Transcriptional repressor of the FliC phase-1 flagellin. In Salmonella abony, this protein is Repressor of phase 1 flagellin gene (fljA).